Here is a 420-residue protein sequence, read N- to C-terminus: MTLLALGINHKTAPVSLRERVTFSPESIDQALASLLQQPLVQGGVVLSTCNRTELYLSVEQQENLHEQLIAWLCNYHKLSPDEVKKSLYWHHGNDAVSHLMRVASGLDSLVLGEPQILGQVKKAFAESQREQSLSGELERLFQKTFSVAKRVRTETEIGASAVSVAFAACTLARQIFESLSELNVLLVGAGETIELVARHLREHQVKHMIIANRTRERAQALATEVGAEVITLPEIDARLADADIIISSTASPLPIIGKGMVERALKSRRNQPMLFVDIAVPRDIEPEVGKLSNAYLYSVDDLQAIIQHNMAQRQAAAVQAESIVQQESMNFMTWLRAQGAVETIRDYRSQAEQVRSEMTAKALAAIEQGANVEQVVNELAHKLTNRLIHAPTKSLQQAASDGDMERLQLLRDSLGLDQH.

Substrate contacts are provided by residues 49–52 (TCNR), Ser-109, 114–116 (EPQ), and Gln-120. Cys-50 acts as the Nucleophile in catalysis. 189–194 (GAGETI) provides a ligand contact to NADP(+).

The protein belongs to the glutamyl-tRNA reductase family. Homodimer.

It catalyses the reaction (S)-4-amino-5-oxopentanoate + tRNA(Glu) + NADP(+) = L-glutamyl-tRNA(Glu) + NADPH + H(+). It functions in the pathway porphyrin-containing compound metabolism; protoporphyrin-IX biosynthesis; 5-aminolevulinate from L-glutamyl-tRNA(Glu): step 1/2. Functionally, catalyzes the NADPH-dependent reduction of glutamyl-tRNA(Glu) to glutamate 1-semialdehyde (GSA). In Yersinia enterocolitica serotype O:8 / biotype 1B (strain NCTC 13174 / 8081), this protein is Glutamyl-tRNA reductase.